The following is a 404-amino-acid chain: SL1278 acyltransferase Chp1 (404 aa).

Residues 1-42 (MKCPGVSDCVATVRHDNVFAIAAGLRWSAAVPPLHKGDAVTK) lie on the Periplasmic side of the membrane. Residues 43 to 63 (LLVGAIAGGMLACAAILGDGI) traverse the membrane as a helical segment. Residues 64–404 (ASADTALIVP…RGLLPKGKKH (341 aa)) lie on the Cytoplasmic side of the membrane. The PE-PPE domain occupies 104 to 325 (PTATRHVVSY…LRPIIDRAYQ (222 aa)).

It belongs to the mycobacterial PPE family.

Its subcellular location is the cell inner membrane. The enzyme catalyses 3 3'-(hydroxy)phthioceranyl-2'-palmitoyl(stearoyl)-2-O-sulfo-alpha,alpha-trehalose = 3,6,6'-tris-(hydroxy)phthioceranyl-2-palmitoyl(stearoyl)-2'-sulfo-alpha-alpha-trehalose + 2 2'-palmitoyl/stearoyl-2-O-sulfo-alpha,alpha-trehalose.. Its activity is regulated as follows. Activity is potentiated by the SL-1 transporter MmpL8. Inhibited by the lipase inhibitor tetrahydrolipstatin (THL). In terms of biological role, involved in the final steps of the cell wall sulfolipid-1 (SL-1) biosynthesis. Catalyzes two successive acylations of the precursor 2-palmitoyl-3-(C43)-phthioceranyl-alpha, alpha'-D-trehalose-2'-sulfate (SL1278) to yield the tetraacylated sulfolipid SL-1. In Mycobacterium tuberculosis (strain ATCC 25618 / H37Rv), this protein is SL1278 acyltransferase Chp1.